Consider the following 580-residue polypeptide: TRAF-type zinc finger domain-containing protein 1 (580 aa).

Alanine 2 bears the N-acetylalanine mark. The TRAF-type zinc-finger motif lies at 27-103 (IHEIHCQRNI…DLELSVLKLK (77 aa)). Position 190 is a phosphoserine (serine 190). Residues 197-209 (TTNQRSMTAQFPI) are compositionally biased toward polar residues. The disordered stretch occupies residues 197-236 (TTNQRSMTAQFPIQNNLLEEQERQERNRSRQTPKERGEDS). The segment covering 216 to 235 (EQERQERNRSRQTPKERGED) has biased composition (basic and acidic residues). A phosphoserine mark is found at serine 326, serine 414, and serine 429. Residues 392–580 (PATANNHVSE…GAGDAEEEEE (189 aa)) form a disordered region. Positions 409–419 (QPRETSPELPK) are enriched in basic and acidic residues. Residues 453-463 (PPNNTTAPPNR) are compositionally biased toward low complexity. A Phosphoserine modification is found at serine 469.

As to quaternary structure, interacts with MAVS, TICAM1, TRAF1, TRAF2, TRAF3 and TRAF6.

Its function is as follows. Negative feedback regulator that controls excessive innate immune responses. Regulates both Toll-like receptor 4 (TLR4) and DDX58/RIG1-like helicases (RLH) pathways. May inhibit the LTR pathway by direct interaction with TRAF6 and attenuation of NF-kappa-B activation. May negatively regulate the RLH pathway downstream from MAVS and upstream of NF-kappa-B and IRF3. The protein is TRAF-type zinc finger domain-containing protein 1 (TRAFD1) of Bos taurus (Bovine).